We begin with the raw amino-acid sequence, 175 residues long: Putative transmembrane protein ORF175 (175 aa).

A run of 4 helical transmembrane segments spans residues 14–34, 58–78, 101–121, and 142–162; these read LGIVYGSTLIILLLPLIGSFM, VLSNFGIFGGLALGVGSAIAF, IVVALLVSQFIFGGWATFALF, and ITPFIDGLIATLGGLMVVLSI.

It localises to the host membrane. This is Putative transmembrane protein ORF175 from Acidianus two-tailed virus (ATV).